The chain runs to 183 residues: Threonylcarbamoyl-AMP synthase (183 aa).

Positions 1 to 183 (MNITQIIEKL…LFTNQLVRQG (183 aa)) constitute a YrdC-like domain.

It belongs to the SUA5 family. TsaC subfamily.

The protein localises to the cytoplasm. The catalysed reaction is L-threonine + hydrogencarbonate + ATP = L-threonylcarbamoyladenylate + diphosphate + H2O. In terms of biological role, required for the formation of a threonylcarbamoyl group on adenosine at position 37 (t(6)A37) in tRNAs that read codons beginning with adenine. Catalyzes the conversion of L-threonine, HCO(3)(-)/CO(2) and ATP to give threonylcarbamoyl-AMP (TC-AMP) as the acyladenylate intermediate, with the release of diphosphate. The sequence is that of Threonylcarbamoyl-AMP synthase from Histophilus somni (strain 129Pt) (Haemophilus somnus).